The primary structure comprises 144 residues: Angiogenin-4 (144 aa).

The N-terminal stretch at 1 to 24 (MTMSPCPLLLVFVLGLVVIPPTLA) is a signal peptide. Residue histidine 36 is the Proton acceptor of the active site. 3 cysteine pairs are disulfide-bonded: cysteine 49/cysteine 103, cysteine 62/cysteine 114, and cysteine 80/cysteine 129. The Nucleolar localization signal motif lies at 54 to 58 (KERKL). The active-site Proton donor is histidine 136.

This sequence belongs to the pancreatic ribonuclease family. Detected in small intestine, caecum and colon, with the highest expression in Paneth cells in the intestinal epithelium.

The protein resides in the secreted. It is found in the cytoplasmic vesicle. The protein localises to the secretory vesicle lumen. Its subcellular location is the nucleus. It localises to the nucleolus. Its function is as follows. Has bactericidal activity against E.faecalis and L.monocytogenes, but not against L.innocua and E.coli. Promotes angiogenesis (in vitro). Has low ribonuclease activity (in vitro). Promotes proliferation of melanoma cells, but not of endothelial cells or fibroblasts (in vitro). The protein is Angiogenin-4 (Ang4) of Mus musculus (Mouse).